We begin with the raw amino-acid sequence, 65 residues long: MLSIKVDERKPFDISLRNFKRACEKAGIKQELRDRQHYVKPTEKRKIAKRQAVKRARISQRRAFI.

Belongs to the bacterial ribosomal protein bS21 family.

The polypeptide is Small ribosomal subunit protein bS21A (Francisella tularensis subsp. tularensis (strain FSC 198)).